Consider the following 120-residue polypeptide: Insoluble matrix shell protein 2 (120 aa).

Positions 1 to 20 (MHQSSLGVLVLFSLIYLCIS) are cleaved as a signal peptide.

Component of the acid-insoluble organic matrix of the calcified shell.

Its subcellular location is the secreted. In Ruditapes philippinarum (Japanese carpet shell), this protein is Insoluble matrix shell protein 2.